The following is a 167-amino-acid chain: uncharacterized protein (167 aa).

Residues Leu-28–Glu-59 are a coiled coil.

This is an uncharacterized protein from Aquifex aeolicus (strain VF5).